We begin with the raw amino-acid sequence, 373 residues long: MAGWSCLVTGGGGFLGQRIICLLVEEKDLQEIRVLDKVFRPEVREEFSKLQSKIKLTLLEGDILDEQCLKGACQGTSVVIHTASVIDVRNAVPRETIMNVNVKGTQLLLEACVQASVPVFIHTSTIEVAGPNSYREIIQDGREEEHHESAWSSPYPYSKKLAEKAVLGANGWALKNGGTLYTCALRPMYIYGEGSPFLSAYMHGALNNNGILTNHCKFSRVNPVYVGNVAWAHILALRALRDPKKVPNIQGQFYYISDDTPHQSYDDLNYTLSKEWGFCLDSRMSLPISLQYWLAFLLEIVSFLLSPIYKYNPCFNRHLVTLSNSVFTFSYKKAQRDLGYEPLYTWEEAKQKTKEWIGSLVKQHKETLKTKIH.

Residue tyrosine 155 is the Proton acceptor of the active site. Position 159 (lysine 159) interacts with NAD(+). Residues 288-308 traverse the membrane as a helical segment; it reads ISLQYWLAFLLEIVSFLLSPI.

This sequence belongs to the 3-beta-HSD family.

It localises to the endoplasmic reticulum membrane. It is found in the mitochondrion membrane. It catalyses the reaction a 3beta-hydroxy-Delta(5)-steroid + NAD(+) = a 3-oxo-Delta(5)-steroid + NADH + H(+). The catalysed reaction is a 3-oxo-Delta(5)-steroid = a 3-oxo-Delta(4)-steroid. It participates in lipid metabolism; steroid biosynthesis. 3-beta-HSD is a bifunctional enzyme, that catalyzes the oxidative conversion of Delta(5)-ene-3-beta-hydroxy steroid, and the oxidative conversion of ketosteroids. The 3-beta-HSD enzymatic system plays a crucial role in the biosynthesis of all classes of hormonal steroids. This Bos taurus (Bovine) protein is 3 beta-hydroxysteroid dehydrogenase/Delta 5--&gt;4-isomerase (HSD3B).